The following is a 204-amino-acid chain: Probable 5-formyltetrahydrofolate cyclo-ligase (204 aa).

An ATP-binding site is contributed by lysine 5–arginine 9. Substrate-binding positions include glutamate 57, tryptophan 102, and histidine 140–tyrosine 144. Residues glycine 139 to aspartate 146 and aspartate 188 each bind ATP.

The protein belongs to the 5-formyltetrahydrofolate cyclo-ligase family.

It catalyses the reaction (6S)-5-formyl-5,6,7,8-tetrahydrofolate + ATP = (6R)-5,10-methenyltetrahydrofolate + ADP + phosphate. The polypeptide is Probable 5-formyltetrahydrofolate cyclo-ligase (Schizosaccharomyces pombe (strain 972 / ATCC 24843) (Fission yeast)).